We begin with the raw amino-acid sequence, 128 residues long: uncharacterized protein (128 aa).

Residues 1–50 (MSNEQGKGMGFFGNKGKPASEKKDEKKTKLDLDYKPDLNPSTPYDPTLPV) are disordered. Residues 18–36 (PASEKKDEKKTKLDLDYKP) show a composition bias toward basic and acidic residues.

This is an uncharacterized protein from Bacillus anthracis.